Consider the following 172-residue polypeptide: Adrenodoxin homolog, mitochondrial (172 aa).

A mitochondrion-targeting transit peptide spans Met-1–Asn-16. The 103-residue stretch at Leu-61–Thr-163 folds into the 2Fe-2S ferredoxin-type domain. Cys-98, Cys-104, Cys-107, and Cys-144 together coordinate [2Fe-2S] cluster.

It belongs to the adrenodoxin/putidaredoxin family. Interacts in its reduced state with the apo form of ISU1. [2Fe-2S] cluster serves as cofactor.

The protein localises to the mitochondrion matrix. Its function is as follows. Iron-sulfur protein that transfers electrons in a wide variety of metabolic reactions. Involved in heme A biosynthesis and in iron-sulfur cluster assembly. Transfers electrons from adrenodoxin reductase ARH1 to heme A synthase COX15, a heme protein that catalyzes the conversion of heme O to heme A. Required for the de novo synthesis of Fe-S clusters on iron sulfur cluster assembly protein ISU1. Interact in its reduced state with ISU1 to productively deliver electrons for Fe-S cluster synthesis. Essential for coenzyme Q biosynthesis. May transfer the electrons required for the hydroxylation reaction performed by COQ6. This chain is Adrenodoxin homolog, mitochondrial, found in Saccharomyces cerevisiae (strain ATCC 204508 / S288c) (Baker's yeast).